We begin with the raw amino-acid sequence, 148 residues long: Large ribosomal subunit protein bL9 (148 aa).

It belongs to the bacterial ribosomal protein bL9 family.

Functionally, binds to the 23S rRNA. This Listeria monocytogenes serotype 4a (strain HCC23) protein is Large ribosomal subunit protein bL9.